A 469-amino-acid polypeptide reads, in one-letter code: ATP-dependent protease ATPase subunit HslU (469 aa).

ATP-binding positions include Ile24, 66-71 (GVGKTE), Asp282, Glu347, and Arg419.

The protein belongs to the ClpX chaperone family. HslU subfamily. As to quaternary structure, a double ring-shaped homohexamer of HslV is capped on each side by a ring-shaped HslU homohexamer. The assembly of the HslU/HslV complex is dependent on binding of ATP.

It localises to the cytoplasm. In terms of biological role, ATPase subunit of a proteasome-like degradation complex; this subunit has chaperone activity. The binding of ATP and its subsequent hydrolysis by HslU are essential for unfolding of protein substrates subsequently hydrolyzed by HslV. HslU recognizes the N-terminal part of its protein substrates and unfolds these before they are guided to HslV for hydrolysis. The polypeptide is ATP-dependent protease ATPase subunit HslU (Listeria monocytogenes serovar 1/2a (strain ATCC BAA-679 / EGD-e)).